Consider the following 124-residue polypeptide: UPF0482 protein YPK_1977 (124 aa).

Positions 1–32 are cleaved as a signal peptide; that stretch reads MMKINNLPRLIRAFLPATLLMLPLVWQTPALA. Residues 47-69 form a disordered region; it reads GGNNDPMSKEQARQSQQQWDETN.

The protein belongs to the UPF0482 family.

The polypeptide is UPF0482 protein YPK_1977 (Yersinia pseudotuberculosis serotype O:3 (strain YPIII)).